Reading from the N-terminus, the 132-residue chain is Small ribosomal subunit protein uS8 (132 aa).

Belongs to the universal ribosomal protein uS8 family. Part of the 30S ribosomal subunit. Contacts proteins S5 and S12.

In terms of biological role, one of the primary rRNA binding proteins, it binds directly to 16S rRNA central domain where it helps coordinate assembly of the platform of the 30S subunit. The sequence is that of Small ribosomal subunit protein uS8 from Sinorhizobium fredii (strain NBRC 101917 / NGR234).